A 572-amino-acid chain; its full sequence is MCSISFVNLISMSLSCFLLSLYFLLNDMIYFIEWELVSLNSMSIVMTFLFDWMSLLFMSFVLMISSLVIFYSKEYMMNDNHINRFIMLVLMFVLSMMLLIISPNLISILLGWDGLGLVSYCLVIYFQNIKSYNAGMLTALSNRIGDVALLLSIAWMLNYGSWNYIFYLEIMQNEFEMLMIGSLVMLAAMTKSAQIPFSSWLPAAMAAPTPVSALVHSSTLVTAGVYLLIRFNIILSTSWLGQLMLLLSGLTMFMAGLGANFEFDLKKIIALSTLSQLGLMMSILSMGFLKLAMFHLLTHALFKALLFMCAGAIIHNMNNSQDIRLMGGLSIHMPLTSACFNVSNLALCGMPFLAGFYSKDMILEIVSISNVNMFSFFLYYFSTGLTVSYSFRLVYYSMTGDLNCGSLNMLNDESWIMLRGMMGLLIMSIIGGSMLNWLIFPFPYMICLPIYMKLLTLFVCIVGGLFGYLISLSNLFFLNKSLFMYNLSTFLGSMWFMPYISTYGMIFYPLNYGQLVVKSFDQGWSEYFGGQHLYQKLSMYSKTLFLMHNNSLKIYLLLFVFWILILLILLFL.

The next 16 helical transmembrane spans lie at 4 to 24, 44 to 64, 86 to 106, 107 to 127, 147 to 167, 170 to 190, 217 to 237, 239 to 259, 268 to 288, 294 to 314, 337 to 357, 372 to 394, 422 to 442, 457 to 477, 490 to 510, and 552 to 572; these read ISFV…LYFL, IVMT…VLMI, IMLV…PNLI, SILL…IYFQ, VALL…YIFY, IMQN…AAMT, SSTL…ILST, WLGQ…GLGA, IIAL…SMGF, FHLL…GAII, SACF…AGFY, NMFS…FRLV, MGLL…IFPF, LFVC…NLFF, FLGS…FYPL, and LKIY…LLFL.

The protein belongs to the complex I subunit 5 family.

The protein localises to the mitochondrion inner membrane. It catalyses the reaction a ubiquinone + NADH + 5 H(+)(in) = a ubiquinol + NAD(+) + 4 H(+)(out). Its function is as follows. Core subunit of the mitochondrial membrane respiratory chain NADH dehydrogenase (Complex I) that is believed to belong to the minimal assembly required for catalysis. Complex I functions in the transfer of electrons from NADH to the respiratory chain. The immediate electron acceptor for the enzyme is believed to be ubiquinone. The sequence is that of NADH-ubiquinone oxidoreductase chain 5 (mt:ND5) from Drosophila melanogaster (Fruit fly).